Here is a 336-residue protein sequence, read N- to C-terminus: Dihydroorotate dehydrogenase (quinone) (336 aa).

Residues 62 to 66 and Thr86 contribute to the FMN site; that span reads AGLDK. Residue Lys66 participates in substrate binding. 111 to 115 is a binding site for substrate; sequence NRMGF. FMN is bound by residues Asn139 and Asn172. Asn172 serves as a coordination point for substrate. Ser175 functions as the Nucleophile in the catalytic mechanism. Asn177 contributes to the substrate binding site. Residues Lys217 and Thr245 each contribute to the FMN site. Residue 246 to 247 coordinates substrate; sequence NT. FMN is bound by residues Gly268, Gly297, and 318–319; that span reads YS.

This sequence belongs to the dihydroorotate dehydrogenase family. Type 2 subfamily. In terms of assembly, monomer. Requires FMN as cofactor.

The protein resides in the cell membrane. The enzyme catalyses (S)-dihydroorotate + a quinone = orotate + a quinol. Its pathway is pyrimidine metabolism; UMP biosynthesis via de novo pathway; orotate from (S)-dihydroorotate (quinone route): step 1/1. Catalyzes the conversion of dihydroorotate to orotate with quinone as electron acceptor. The polypeptide is Dihydroorotate dehydrogenase (quinone) (Escherichia coli (strain UTI89 / UPEC)).